Here is an 88-residue protein sequence, read N- to C-terminus: Cell division topological specificity factor (88 aa).

It belongs to the MinE family.

Prevents the cell division inhibition by proteins MinC and MinD at internal division sites while permitting inhibition at polar sites. This ensures cell division at the proper site by restricting the formation of a division septum at the midpoint of the long axis of the cell. The protein is Cell division topological specificity factor of Paracidovorax citrulli (strain AAC00-1) (Acidovorax citrulli).